Reading from the N-terminus, the 433-residue chain is tRNA-2-methylthio-N(6)-dimethylallyladenosine synthase (433 aa).

The MTTase N-terminal domain occupies 4-119 (KKLFIQTLGC…ITQAIKTPKF (116 aa)). C13, C50, C82, C151, C155, and C158 together coordinate [4Fe-4S] cluster. The Radical SAM core domain maps to 137 to 370 (RNSIYKSYIN…QNRHSEILDE (234 aa)). One can recognise a TRAM domain in the interval 373 to 433 (KKQENKTFKV…KRMVLYGEII (61 aa)).

It belongs to the methylthiotransferase family. MiaB subfamily. As to quaternary structure, monomer. Requires [4Fe-4S] cluster as cofactor.

It localises to the cytoplasm. The catalysed reaction is N(6)-dimethylallyladenosine(37) in tRNA + (sulfur carrier)-SH + AH2 + 2 S-adenosyl-L-methionine = 2-methylsulfanyl-N(6)-dimethylallyladenosine(37) in tRNA + (sulfur carrier)-H + 5'-deoxyadenosine + L-methionine + A + S-adenosyl-L-homocysteine + 2 H(+). Catalyzes the methylthiolation of N6-(dimethylallyl)adenosine (i(6)A), leading to the formation of 2-methylthio-N6-(dimethylallyl)adenosine (ms(2)i(6)A) at position 37 in tRNAs that read codons beginning with uridine. This is tRNA-2-methylthio-N(6)-dimethylallyladenosine synthase from Campylobacter jejuni subsp. doylei (strain ATCC BAA-1458 / RM4099 / 269.97).